The primary structure comprises 137 residues: Large ribosomal subunit protein uL16 (137 aa).

Belongs to the universal ribosomal protein uL16 family. As to quaternary structure, part of the 50S ribosomal subunit.

Binds 23S rRNA and is also seen to make contacts with the A and possibly P site tRNAs. In Cereibacter sphaeroides (strain ATCC 17025 / ATH 2.4.3) (Rhodobacter sphaeroides), this protein is Large ribosomal subunit protein uL16.